The primary structure comprises 377 residues: Proteinase-activated receptor 3 (377 aa).

Positions M1 to C19 are cleaved as a signal peptide. A propeptide spans Q20–K38 (removed for receptor activation). At T39 to T94 the chain is on the extracellular side. N-linked (GlcNAc...) asparagine glycosylation is present at N82. Residues K95 to F120 form a helical membrane-spanning segment. At R121 to M127 the chain is on the cytoplasmic side. Residues T128–F147 traverse the membrane as a helical segment. Over R148 to R166 the chain is Extracellular. A disulfide bridge links C165 with C244. The chain crosses the membrane as a helical span at residues A167 to I188. Over N189–K205 the chain is Cytoplasmic. A helical transmembrane segment spans residues R206–I229. The Extracellular segment spans residues L230–L259. Residues Y260–Y279 form a helical membrane-spanning segment. Topologically, residues C280–L296 are cytoplasmic. The helical transmembrane segment at W297–I321 threads the bilayer. Over I322–L335 the chain is Extracellular. Residues Y336–M360 form a helical membrane-spanning segment. At S361–S377 the chain is on the cytoplasmic side.

Belongs to the G-protein coupled receptor 1 family. As to quaternary structure, interacts with INSC/inscuteable and GPSM2. In terms of processing, a proteolytic cleavage generates a new N-terminus that functions as a tethered ligand.

The protein localises to the cell membrane. Functionally, receptor for activated thrombin coupled to G proteins that stimulate phosphoinositide hydrolysis. This is Proteinase-activated receptor 3 (F2RL2) from Bos taurus (Bovine).